Reading from the N-terminus, the 414-residue chain is 2,3-bisphosphoglycerate-independent phosphoglycerate mutase (414 aa).

Belongs to the BPG-independent phosphoglycerate mutase family. A-PGAM subfamily.

The enzyme catalyses (2R)-2-phosphoglycerate = (2R)-3-phosphoglycerate. Its pathway is carbohydrate degradation; glycolysis; pyruvate from D-glyceraldehyde 3-phosphate: step 3/5. Functionally, catalyzes the interconversion of 2-phosphoglycerate and 3-phosphoglycerate. The sequence is that of 2,3-bisphosphoglycerate-independent phosphoglycerate mutase from Saccharolobus islandicus (strain L.S.2.15 / Lassen #1) (Sulfolobus islandicus).